The following is a 166-amino-acid chain: Large ribosomal subunit protein uL10 (166 aa).

In terms of assembly, part of the ribosomal stalk of the 50S ribosomal subunit. The N-terminus interacts with L11 and 23S rRNA to form the base of the stalk. The C-terminus forms an elongated spine to which L12 dimers bind in a sequential fashion forming a pentameric L10(L12)2(L12)2 complex.

Functionally, forms part of the ribosomal stalk, playing a central role in the interaction of the ribosome with GTP-bound translation factors (such as IF-2, EF-Tu, EF-G and RF3). In Bacillus subtilis (strain 168), this protein is Large ribosomal subunit protein uL10 (rplJ).